We begin with the raw amino-acid sequence, 89 residues long: MSLNAETKAAIVAEYARCENDTGSPEVQIALLTASINHLQGHFQAHKGDHHSRRGLLRMVSSRRKLLDYLKGKDLSRYQDLIKRLGLRR.

It belongs to the universal ribosomal protein uS15 family. As to quaternary structure, part of the 30S ribosomal subunit. Forms a bridge to the 50S subunit in the 70S ribosome, contacting the 23S rRNA.

Its function is as follows. One of the primary rRNA binding proteins, it binds directly to 16S rRNA where it helps nucleate assembly of the platform of the 30S subunit by binding and bridging several RNA helices of the 16S rRNA. In terms of biological role, forms an intersubunit bridge (bridge B4) with the 23S rRNA of the 50S subunit in the ribosome. This chain is Small ribosomal subunit protein uS15, found in Vibrio cholerae serotype O1 (strain ATCC 39541 / Classical Ogawa 395 / O395).